Here is a 321-residue protein sequence, read N- to C-terminus: Tetraacyldisaccharide 4'-kinase (321 aa).

54–61 (SVGGTGKT) is an ATP binding site.

The protein belongs to the LpxK family.

The enzyme catalyses a lipid A disaccharide + ATP = a lipid IVA + ADP + H(+). It participates in glycolipid biosynthesis; lipid IV(A) biosynthesis; lipid IV(A) from (3R)-3-hydroxytetradecanoyl-[acyl-carrier-protein] and UDP-N-acetyl-alpha-D-glucosamine: step 6/6. In terms of biological role, transfers the gamma-phosphate of ATP to the 4'-position of a tetraacyldisaccharide 1-phosphate intermediate (termed DS-1-P) to form tetraacyldisaccharide 1,4'-bis-phosphate (lipid IVA). This chain is Tetraacyldisaccharide 4'-kinase, found in Rickettsia peacockii (strain Rustic).